The sequence spans 227 residues: Flagellar transcriptional regulator FtcR (227 aa).

The region spanning 1 to 116 (MIVVVDDRDM…EILARINAIR (116 aa)) is the Response regulatory domain. A DNA-binding region (ompR/PhoB-type) is located at residues 127–226 (ADGTQLGPIR…KRFLGYCINI (100 aa)).

Functionally, required for transcription of flagellar genes. The polypeptide is Flagellar transcriptional regulator FtcR (ftcR) (Brucella abortus (strain 2308)).